The primary structure comprises 176 residues: Protein GrpE (176 aa).

The protein belongs to the GrpE family. As to quaternary structure, homodimer.

It localises to the cytoplasm. Functionally, participates actively in the response to hyperosmotic and heat shock by preventing the aggregation of stress-denatured proteins, in association with DnaK and GrpE. It is the nucleotide exchange factor for DnaK and may function as a thermosensor. Unfolded proteins bind initially to DnaJ; upon interaction with the DnaJ-bound protein, DnaK hydrolyzes its bound ATP, resulting in the formation of a stable complex. GrpE releases ADP from DnaK; ATP binding to DnaK triggers the release of the substrate protein, thus completing the reaction cycle. Several rounds of ATP-dependent interactions between DnaJ, DnaK and GrpE are required for fully efficient folding. In Meiothermus ruber, this protein is Protein GrpE.